We begin with the raw amino-acid sequence, 578 residues long: Thrombomodulin (578 aa).

The first 16 residues, Met1–Gly16, serve as a signal peptide directing secretion. Topologically, residues Leu17–Ser518 are extracellular. Positions Met31–Cys167 constitute a C-type lectin domain. Residue Asn114 is glycosylated (N-linked (GlcNAc...) asparagine). 19 disulfide bridges follow: Cys137/Cys158, Cys246/Cys257, Cys253/Cys266, Cys268/Cys281, Cys289/Cys297, Cys293/Cys309, Cys311/Cys324, Cys330/Cys341, Cys337/Cys350, Cys352/Cys363, Cys370/Cys379, Cys375/Cys389, Cys391/Cys405, Cys409/Cys414, Cys418/Cys426, Cys428/Cys440, Cys446/Cys455, Cys451/Cys464, and Cys466/Cys480. 2 consecutive EGF-like domains span residues Gly242–Ala282 and Ala285–Glu325. Asn300 carries N-linked (GlcNAc...) asparagine glycosylation. An EGF-like 3; calcium-binding domain is found at Asp326–Val364. Residue Asn343 is modified to (3R)-3-hydroxyasparagine. 2 consecutive EGF-like domains span residues Pro366–Gln406 and Cys405–Thr441. A glycan (N-linked (GlcNAc...) asparagine) is linked at Asn410. The region spanning Asp442–Gly481 is the EGF-like 6; calcium-binding domain. Residues Ile483–Pro512 are disordered. 2 O-linked (Xyl...) (chondroitin sulfate) serine glycosylation sites follow: Ser493 and Ser495. Residues Pro499–Pro512 are compositionally biased toward pro residues. The helical transmembrane segment at Gly519–Leu539 threads the bilayer. At Cys540 to Leu578 the chain is on the cytoplasmic side.

As to quaternary structure, interacts with ITGAL, ITGAM and ITGB2. Interacts with thrombin/F2; this interaction switches the specificity of thrombin from a procoagulant to an anticoagulant and antifibrinolytic protease. Interacts with ANGP1 and ANGP2; these interactions significantly inhibit the generation of activated PC and TAFIa/CPB2 by the thrombin/thrombomodulin complex. Interacts with PF4; this interaction enhances generation of activated protein C. Interacts with HMGB1; this interaction inhibits HMGB1 inflammatory activity. Post-translationally, N-glycosylated. The iron and 2-oxoglutarate dependent 3-hydroxylation of aspartate and asparagine is (R) stereospecific within EGF domains. Expressed in lung, liver, spleen, kidney, pancreas and lymph node. Low expression in heart, cerebrum, urinary bladder and uterus.

The protein resides in the membrane. Its function is as follows. Endothelial cell receptor that plays a critical role in regulating several physiological processes including hemostasis, coagulation, fibrinolysis, inflammation, and angiogenesis. Acts as a cofactor for thrombin activation of protein C/PROC on the surface of vascular endothelial cells leading to initiation of the activated protein C anticoagulant pathway. Also accelerates the activation of the plasma carboxypeptidase B2/CPB2, which catalyzes removal of C-terminal basic amino acids from its substrates including kinins or anaphylatoxins leading to fibrinolysis inhibition. Plays critical protective roles in changing the cleavage specificity of protease-activated receptor 1/PAR1, inhibiting endothelial cell permeability and inflammation. Suppresses inflammation distinctly from its anticoagulant cofactor activity by sequestering HMGB1 thereby preventing it from engaging cellular receptors such as RAGE and contributing to the inflammatory response. The polypeptide is Thrombomodulin (THBD) (Canis lupus familiaris (Dog)).